We begin with the raw amino-acid sequence, 1383 residues long: Palladin (1383 aa).

Disordered regions lie at residues Met1–Lys22, Asp52–Cys169, and Phe183–Gly238. Residues His78–Asp96 show a composition bias toward basic and acidic residues. The segment covering Arg191–Asp201 has biased composition (polar residues). Ser192 bears the Phosphoserine mark. The segment covering Gln210 to Pro223 has biased composition (low complexity). The region spanning Pro271 to Phe360 is the Ig-like C2-type 1 domain. A disulfide bridge connects residues Cys292 and Cys344. Ser401 carries the post-translational modification Phosphoserine. The region spanning Pro440–Thr539 is the Ig-like C2-type 2 domain. Cysteines 462 and 521 form a disulfide. An interaction with VASP region spans residues Phe562–Pro566. 3 disordered regions span residues Glu609–Pro653, Ala673–Ser728, and Ala740–His846. Ser632 carries the post-translational modification Phosphoserine. Position 635 is a phosphothreonine (Thr635). Phosphoserine is present on Ser641. The interaction with LASP1 stretch occupies residues Pro646–Arg676. The segment at Arg676–Ala696 is interaction with SORBS2, SPIN90 and SRC. Over residues Gln677–Phe697 the composition is skewed to pro residues. Residues Ser684, Ser688, and Ser728 each carry the phosphoserine modification. Residues Pro745–Ser763 are compositionally biased toward low complexity. The interaction with EPS8 stretch occupies residues Ser766 to Pro831. The interval Ser796 to Pro831 is interaction with SORBS2, SPIN90, SRC and PFN1. 2 stretches are compositionally biased toward pro residues: residues Pro797–Phe807 and Asp817–Ser830. Positions Phe819 to Pro823 are interaction with VASP. Residues Gly832–His846 show a composition bias toward polar residues. Residues Gln833 to Arg890 form an interaction with ACTN region. Residues Ser893, Ser979, and Ser984 each carry the phosphoserine modification. The Ig-like C2-type 3 domain maps to Pro1001–Ser1085. A disordered region spans residues Asn1096–Asn1125. Residues Arg1098 to His1108 are compositionally biased toward low complexity. Phosphoserine is present on residues Ser1101, Ser1104, Ser1106, and Ser1116. Ser1118 is modified (phosphoserine; by PKB/AKT1). Ser1121 is modified (phosphoserine). Ig-like C2-type domains lie at Pro1135–Ala1226 and Pro1233–Asp1324. 2 interaction with EZR regions span residues Phe1137 to Ala1226 and Phe1236 to Tyr1326. A disulfide bridge connects residues Cys1156 and Cys1208. Position 1352 is a phosphoserine (Ser1352).

The protein belongs to the myotilin/palladin family. Interacts with EPS8. Interacts with LASP1. Interacts with VASP. Interacts with ACTN. Interacts with SORBS2. Interacts with PFN1. Interacts with LPP. Interacts with SPIN90. Interacts with SRC. Interacts with EZR. Interacts with RAI14. Post-translationally, phosphorylated predominantly on serines and, to a lesser extent, on tyrosines. Phosphorylation at Ser-1118 by PKB/AKT1 modulates cytoskeletal organization and cell motility. Detected in both muscle and non-muscle tissues. High expression in prostate, ovary, colon, and kidney. Not detected in spleen, skeletal muscle, lung and peripheral blood lymphocytes (at protein level). Protein is overexpressed in FA6, HPAF, IMIM-PC2, SUIT-2 and PancTu-II sporadic pancreatic cancer cell lines.

The protein localises to the cytoplasm. Its subcellular location is the cytoskeleton. The protein resides in the cell junction. It is found in the focal adhesion. It localises to the myofibril. The protein localises to the sarcomere. Its subcellular location is the z line. The protein resides in the cell projection. It is found in the ruffle. It localises to the podosome. The protein localises to the lamellipodium. Its subcellular location is the axon. The protein resides in the growth cone. Cytoskeletal protein required for organization of normal actin cytoskeleton. Roles in establishing cell morphology, motility, cell adhesion and cell-extracellular matrix interactions in a variety of cell types. May function as a scaffolding molecule with the potential to influence both actin polymerization and the assembly of existing actin filaments into higher-order arrays. Binds to proteins that bind to either monomeric or filamentous actin. Localizes at sites where active actin remodeling takes place, such as lamellipodia and membrane ruffles. Different isoforms may have functional differences. Involved in the control of morphological and cytoskeletal changes associated with dendritic cell maturation. Involved in targeting ACTN to specific subcellular foci. This is Palladin (PALLD) from Homo sapiens (Human).